A 340-amino-acid chain; its full sequence is S-adenosylmethionine:tRNA ribosyltransferase-isomerase (340 aa).

The protein belongs to the QueA family. As to quaternary structure, monomer.

It is found in the cytoplasm. It catalyses the reaction 7-aminomethyl-7-carbaguanosine(34) in tRNA + S-adenosyl-L-methionine = epoxyqueuosine(34) in tRNA + adenine + L-methionine + 2 H(+). Its pathway is tRNA modification; tRNA-queuosine biosynthesis. Its function is as follows. Transfers and isomerizes the ribose moiety from AdoMet to the 7-aminomethyl group of 7-deazaguanine (preQ1-tRNA) to give epoxyqueuosine (oQ-tRNA). In Chlorobaculum parvum (strain DSM 263 / NCIMB 8327) (Chlorobium vibrioforme subsp. thiosulfatophilum), this protein is S-adenosylmethionine:tRNA ribosyltransferase-isomerase.